We begin with the raw amino-acid sequence, 553 residues long: Transcriptional regulator HilA (553 aa).

A DNA-binding region (ompR/PhoB-type) is located at residues 11-107; that stretch reads NKKFVFDDFI…LYGQGYRFNR (97 aa). Position 62 is a 4-aspartylphosphate (Asp-62). The stretch at 372-405 is one TPR repeat; sequence ADIKYYYGWNLFMAGQLEEALQTINECLKLDPTR.

The main transcriptional regulator of the Salmonella pathogenicity island 1 (SPI1) gene expression. Activates the expression of invasion genes by a direct action at their promoters and also indirectly by increasing the level of invF. Also binds upstream of prgH and directly activates the expression of prgHIJK operon. The polypeptide is Transcriptional regulator HilA (hilA) (Salmonella paratyphi A (strain ATCC 9150 / SARB42)).